The primary structure comprises 272 residues: tRNA pseudouridine synthase A (272 aa).

Catalysis depends on Asp-51, which acts as the Nucleophile. Tyr-109 is a binding site for substrate.

The protein belongs to the tRNA pseudouridine synthase TruA family. Homodimer.

The enzyme catalyses uridine(38/39/40) in tRNA = pseudouridine(38/39/40) in tRNA. Its function is as follows. Formation of pseudouridine at positions 38, 39 and 40 in the anticodon stem and loop of transfer RNAs. The chain is tRNA pseudouridine synthase A from Verminephrobacter eiseniae (strain EF01-2).